Here is a 581-residue protein sequence, read N- to C-terminus: Proline--tRNA ligase 1 (581 aa).

This sequence belongs to the class-II aminoacyl-tRNA synthetase family. ProS type 1 subfamily. In terms of assembly, homodimer.

The protein resides in the cytoplasm. It catalyses the reaction tRNA(Pro) + L-proline + ATP = L-prolyl-tRNA(Pro) + AMP + diphosphate. Its function is as follows. Catalyzes the attachment of proline to tRNA(Pro) in a two-step reaction: proline is first activated by ATP to form Pro-AMP and then transferred to the acceptor end of tRNA(Pro). As ProRS can inadvertently accommodate and process non-cognate amino acids such as alanine and cysteine, to avoid such errors it has two additional distinct editing activities against alanine. One activity is designated as 'pretransfer' editing and involves the tRNA(Pro)-independent hydrolysis of activated Ala-AMP. The other activity is designated 'posttransfer' editing and involves deacylation of mischarged Ala-tRNA(Pro). The misacylated Cys-tRNA(Pro) is not edited by ProRS. This Rhodococcus jostii (strain RHA1) protein is Proline--tRNA ligase 1.